We begin with the raw amino-acid sequence, 197 residues long: Imidazoleglycerol-phosphate dehydratase (197 aa).

It belongs to the imidazoleglycerol-phosphate dehydratase family.

The protein resides in the cytoplasm. The catalysed reaction is D-erythro-1-(imidazol-4-yl)glycerol 3-phosphate = 3-(imidazol-4-yl)-2-oxopropyl phosphate + H2O. It participates in amino-acid biosynthesis; L-histidine biosynthesis; L-histidine from 5-phospho-alpha-D-ribose 1-diphosphate: step 6/9. The sequence is that of Imidazoleglycerol-phosphate dehydratase from Cellvibrio japonicus (strain Ueda107) (Pseudomonas fluorescens subsp. cellulosa).